Reading from the N-terminus, the 271-residue chain is 3-methyl-2-oxobutanoate hydroxymethyltransferase (271 aa).

Mg(2+)-binding residues include Asp53 and Asp92. 3-methyl-2-oxobutanoate is bound by residues 53 to 54, Asp92, and Lys120; that span reads DS. Residue Glu122 coordinates Mg(2+). The active-site Proton acceptor is the Glu189.

The protein belongs to the PanB family. Homodecamer; pentamer of dimers. Mg(2+) serves as cofactor.

Its subcellular location is the cytoplasm. The enzyme catalyses 3-methyl-2-oxobutanoate + (6R)-5,10-methylene-5,6,7,8-tetrahydrofolate + H2O = 2-dehydropantoate + (6S)-5,6,7,8-tetrahydrofolate. The protein operates within cofactor biosynthesis; (R)-pantothenate biosynthesis; (R)-pantoate from 3-methyl-2-oxobutanoate: step 1/2. In terms of biological role, catalyzes the reversible reaction in which hydroxymethyl group from 5,10-methylenetetrahydrofolate is transferred onto alpha-ketoisovalerate to form ketopantoate. The chain is 3-methyl-2-oxobutanoate hydroxymethyltransferase from Burkholderia multivorans (strain ATCC 17616 / 249).